A 137-amino-acid polypeptide reads, in one-letter code: ATP synthase epsilon chain, chloroplastic (137 aa).

Belongs to the ATPase epsilon chain family. F-type ATPases have 2 components, CF(1) - the catalytic core - and CF(0) - the membrane proton channel. CF(1) has five subunits: alpha(3), beta(3), gamma(1), delta(1), epsilon(1). CF(0) has three main subunits: a, b and c.

It localises to the plastid. Its subcellular location is the chloroplast thylakoid membrane. Its function is as follows. Produces ATP from ADP in the presence of a proton gradient across the membrane. In Hordeum vulgare (Barley), this protein is ATP synthase epsilon chain, chloroplastic.